The primary structure comprises 462 residues: Asparagine--tRNA ligase (462 aa).

The protein belongs to the class-II aminoacyl-tRNA synthetase family. Homodimer.

It is found in the cytoplasm. It catalyses the reaction tRNA(Asn) + L-asparagine + ATP = L-asparaginyl-tRNA(Asn) + AMP + diphosphate + H(+). This is Asparagine--tRNA ligase from Borreliella afzelii (strain PKo) (Borrelia afzelii).